The chain runs to 356 residues: Probable scoulerine-9-O-methyltransferase OMT2B (356 aa).

Residue Met173 coordinates S-adenosyl-L-methionine. Position 176 (Asp176) interacts with substrate. Residues Thr177, Gly202, Asp225, 245 to 246 (DI), and Lys259 contribute to the S-adenosyl-L-methionine site. 260 to 264 (YVLHN) contacts substrate. His263 (proton acceptor) is an active-site residue.

Belongs to the class I-like SAM-binding methyltransferase superfamily. Cation-independent O-methyltransferase family. COMT subfamily.

It carries out the reaction (S)-scoulerine + S-adenosyl-L-methionine = (S)-tetrahydrocolumbamine + S-adenosyl-L-homocysteine + H(+). It participates in alkaloid biosynthesis. Functionally, methyltransferase involved in the biosynthesis of the benzylisoquinoline alkaloid noscapine. Catalyzes the conversion of (S)-scoulerine to (S)-tetrahydrocolumbamine. The heterodimers OMT2B-SOMT3 and OMT2B-6OMT do not possess 3-O-acetyl-4'-O-demethylpapaveroxine 4'-O-methyltransferase activity. The sequence is that of Probable scoulerine-9-O-methyltransferase OMT2B from Papaver somniferum (Opium poppy).